The primary structure comprises 206 residues: N-(5'-phosphoribosyl)anthranilate isomerase (206 aa).

This sequence belongs to the TrpF family.

The enzyme catalyses N-(5-phospho-beta-D-ribosyl)anthranilate = 1-(2-carboxyphenylamino)-1-deoxy-D-ribulose 5-phosphate. The protein operates within amino-acid biosynthesis; L-tryptophan biosynthesis; L-tryptophan from chorismate: step 3/5. The polypeptide is N-(5'-phosphoribosyl)anthranilate isomerase (Azotobacter vinelandii (strain DJ / ATCC BAA-1303)).